A 241-amino-acid polypeptide reads, in one-letter code: Putative hydrolase 080R (241 aa).

One can recognise a Nudix hydrolase domain in the interval 50–241 (FPDLSFNLMV…VIKVQKIMIL (192 aa)). The Nudix box motif lies at 136 to 157 (GHCNGNEPVLSTLLREFREETT). The Mg(2+) site is built by glutamate 151, glutamate 155, and aspartate 204.

Belongs to the Nudix hydrolase family.

The polypeptide is Putative hydrolase 080R (Aedes vexans (Inland floodwater mosquito)).